Here is a 197-residue protein sequence, read N- to C-terminus: Recombination protein RecR (197 aa).

A C4-type zinc finger spans residues 55–70; that stretch reads CVQCRDFTESEICTIC. The Toprim domain occupies 78–173; that stretch reads QQLCVVESPA…RPSRLAQGMP (96 aa).

It belongs to the RecR family.

May play a role in DNA repair. It seems to be involved in an RecBC-independent recombinational process of DNA repair. It may act with RecF and RecO. This Xanthomonas oryzae pv. oryzae (strain MAFF 311018) protein is Recombination protein RecR.